Consider the following 328-residue polypeptide: Tetraacyldisaccharide 4'-kinase (328 aa).

59–66 (TAGGNGKT) provides a ligand contact to ATP.

It belongs to the LpxK family.

It catalyses the reaction a lipid A disaccharide + ATP = a lipid IVA + ADP + H(+). It functions in the pathway glycolipid biosynthesis; lipid IV(A) biosynthesis; lipid IV(A) from (3R)-3-hydroxytetradecanoyl-[acyl-carrier-protein] and UDP-N-acetyl-alpha-D-glucosamine: step 6/6. Transfers the gamma-phosphate of ATP to the 4'-position of a tetraacyldisaccharide 1-phosphate intermediate (termed DS-1-P) to form tetraacyldisaccharide 1,4'-bis-phosphate (lipid IVA). The sequence is that of Tetraacyldisaccharide 4'-kinase from Aliivibrio fischeri (strain MJ11) (Vibrio fischeri).